The primary structure comprises 189 residues: dCTP deaminase (189 aa).

DCTP is bound by residues 112-117, 136-138, glutamine 157, tyrosine 171, and glutamine 181; these read KSTYAR and TLE. Glutamate 138 functions as the Proton donor/acceptor in the catalytic mechanism.

It belongs to the dCTP deaminase family. In terms of assembly, homotrimer.

The enzyme catalyses dCTP + H2O + H(+) = dUTP + NH4(+). It participates in pyrimidine metabolism; dUMP biosynthesis; dUMP from dCTP (dUTP route): step 1/2. Its function is as follows. Catalyzes the deamination of dCTP to dUTP. In Methylacidiphilum infernorum (isolate V4) (Methylokorus infernorum (strain V4)), this protein is dCTP deaminase.